A 245-amino-acid chain; its full sequence is tRNA (guanine-N(1)-)-methyltransferase (245 aa).

S-adenosyl-L-methionine is bound by residues glycine 114 and 133 to 138 (IGDYVL).

Belongs to the RNA methyltransferase TrmD family. As to quaternary structure, homodimer.

It is found in the cytoplasm. The enzyme catalyses guanosine(37) in tRNA + S-adenosyl-L-methionine = N(1)-methylguanosine(37) in tRNA + S-adenosyl-L-homocysteine + H(+). Functionally, specifically methylates guanosine-37 in various tRNAs. In Prochlorococcus marinus (strain MIT 9312), this protein is tRNA (guanine-N(1)-)-methyltransferase.